Reading from the N-terminus, the 258-residue chain is Zinc import ATP-binding protein ZnuC (258 aa).

The region spanning 7-233 is the ABC transporter domain; sequence ITAKNINHAY…PAFQELFGQG (227 aa). 39-46 provides a ligand contact to ATP; it reads GPNGAGKS.

The protein belongs to the ABC transporter superfamily. Zinc importer (TC 3.A.1.15.5) family. In terms of assembly, the complex is composed of two ATP-binding proteins (ZnuC), two transmembrane proteins (ZnuB) and a solute-binding protein (ZnuA).

It is found in the cell inner membrane. The catalysed reaction is Zn(2+)(out) + ATP(in) + H2O(in) = Zn(2+)(in) + ADP(in) + phosphate(in) + H(+)(in). Part of the ABC transporter complex ZnuABC involved in zinc import. Responsible for energy coupling to the transport system. The polypeptide is Zinc import ATP-binding protein ZnuC (Hydrogenovibrio crunogenus (strain DSM 25203 / XCL-2) (Thiomicrospira crunogena)).